The sequence spans 178 residues: Large ribosomal subunit protein uL10 (178 aa).

Belongs to the universal ribosomal protein uL10 family. In terms of assembly, part of the ribosomal stalk of the 50S ribosomal subunit. The N-terminus interacts with L11 and the large rRNA to form the base of the stalk. The C-terminus forms an elongated spine to which L12 dimers bind in a sequential fashion forming a multimeric L10(L12)X complex.

Forms part of the ribosomal stalk, playing a central role in the interaction of the ribosome with GTP-bound translation factors. The sequence is that of Large ribosomal subunit protein uL10 from Thermosynechococcus vestitus (strain NIES-2133 / IAM M-273 / BP-1).